The sequence spans 682 residues: T-box brain protein 1 (682 aa).

Disordered stretches follow at residues 43-83 (TDNL…RSKL) and 108-127 (SQSS…FPYP). The span at 58–68 (GMTNQSDTDNF) shows a compositional bias: polar residues. A compositionally biased stretch (low complexity) spans 108 to 122 (SQSSQPQSAATAPSA). Residues 213–393 (LWLKFHRHQT…HNPFAKGFRD (181 aa)) constitute a DNA-binding region (T-box). Position 408 is a phosphothreonine (T408). The residue at position 410 (S410) is a Phosphoserine. Disordered regions lie at residues 447–483 (PGAG…SPQR) and 588–658 (GLAA…KSEV). Positions 462–472 (PHTNGLLSPQQ) are enriched in polar residues. Phosphoserine is present on S594. Positions 619 to 629 (SSIKSIDSSDS) are enriched in low complexity. S641 carries the post-translational modification Phosphoserine.

In terms of assembly, homodimer. Part of a complex containing CASK, TBR1 and TSPYL2; may modulate gene expression in response to neuronal synaptic activity. Interacts with FOXP2. Interacts with FOXP1. Interacts with BCL11A. Brain.

The protein resides in the nucleus. Transcriptional repressor involved in multiple aspects of cortical development, including neuronal migration, laminar and areal identity, and axonal projection. As transcriptional repressor of FEZF2, it blocks the formation of the corticospinal (CS) tract from layer 6 projection neurons, thereby restricting the origin of CS axons specifically to layer 5 neurons. The chain is T-box brain protein 1 (TBR1) from Homo sapiens (Human).